Here is a 242-residue protein sequence, read N- to C-terminus: Pyridoxine 5'-phosphate synthase (242 aa).

3-amino-2-oxopropyl phosphate is bound at residue Asn-7. Position 9 to 10 (9 to 10 (DH)) interacts with 1-deoxy-D-xylulose 5-phosphate. Arg-18 lines the 3-amino-2-oxopropyl phosphate pocket. Residue His-44 is the Proton acceptor of the active site. Residues Arg-46 and His-51 each contribute to the 1-deoxy-D-xylulose 5-phosphate site. Catalysis depends on Glu-71, which acts as the Proton acceptor. A 1-deoxy-D-xylulose 5-phosphate-binding site is contributed by Thr-101. His-192 serves as the catalytic Proton donor. Residues Gly-193 and 214 to 215 (GH) each bind 3-amino-2-oxopropyl phosphate.

The protein belongs to the PNP synthase family. Homooctamer; tetramer of dimers.

It is found in the cytoplasm. The enzyme catalyses 3-amino-2-oxopropyl phosphate + 1-deoxy-D-xylulose 5-phosphate = pyridoxine 5'-phosphate + phosphate + 2 H2O + H(+). It participates in cofactor biosynthesis; pyridoxine 5'-phosphate biosynthesis; pyridoxine 5'-phosphate from D-erythrose 4-phosphate: step 5/5. Its function is as follows. Catalyzes the complicated ring closure reaction between the two acyclic compounds 1-deoxy-D-xylulose-5-phosphate (DXP) and 3-amino-2-oxopropyl phosphate (1-amino-acetone-3-phosphate or AAP) to form pyridoxine 5'-phosphate (PNP) and inorganic phosphate. The polypeptide is Pyridoxine 5'-phosphate synthase (Synechocystis sp. (strain ATCC 27184 / PCC 6803 / Kazusa)).